The sequence spans 610 residues: Glutamine--fructose-6-phosphate aminotransferase [isomerizing] (610 aa).

The active-site Nucleophile; for GATase activity is the Cys2. The Glutamine amidotransferase type-2 domain maps to 2–219; the sequence is CGIVGATSER…EGDVADINRT (218 aa). 2 consecutive SIS domains span residues 287–427 and 459–600; these read AADI…YRGM and LAQD…VDQP. Residue Lys605 is the For Fru-6P isomerization activity of the active site.

In terms of assembly, homodimer.

The protein resides in the cytoplasm. The catalysed reaction is D-fructose 6-phosphate + L-glutamine = D-glucosamine 6-phosphate + L-glutamate. Functionally, catalyzes the first step in hexosamine metabolism, converting fructose-6P into glucosamine-6P using glutamine as a nitrogen source. This is Glutamine--fructose-6-phosphate aminotransferase [isomerizing] from Idiomarina loihiensis (strain ATCC BAA-735 / DSM 15497 / L2-TR).